Reading from the N-terminus, the 85-residue chain is Protein BTH_I0359 (85 aa).

This is Protein BTH_I0359 from Burkholderia thailandensis (strain ATCC 700388 / DSM 13276 / CCUG 48851 / CIP 106301 / E264).